The following is a 470-amino-acid chain: Argininosuccinate lyase (470 aa).

Belongs to the lyase 1 family. Argininosuccinate lyase subfamily.

Its subcellular location is the cytoplasm. It carries out the reaction 2-(N(omega)-L-arginino)succinate = fumarate + L-arginine. It functions in the pathway amino-acid biosynthesis; L-arginine biosynthesis; L-arginine from L-ornithine and carbamoyl phosphate: step 3/3. This Mycolicibacterium gilvum (strain PYR-GCK) (Mycobacterium gilvum (strain PYR-GCK)) protein is Argininosuccinate lyase.